A 463-amino-acid polypeptide reads, in one-letter code: GTPase Der (463 aa).

2 EngA-type G domains span residues 3–166 (PVVA…PESG) and 177–350 (IRIA…QSAM). Residues 9 to 16 (GRTNVGKS), 56 to 60 (DTGGI), 118 to 121 (NKID), 183 to 190 (GRPNVGKS), 230 to 234 (DTAGI), and 295 to 298 (NKWD) each bind GTP. In terms of domain architecture, KH-like spans 351 to 435 (LDLSASRLTQ…PLKLVFKSAE (85 aa)).

It belongs to the TRAFAC class TrmE-Era-EngA-EngB-Septin-like GTPase superfamily. EngA (Der) GTPase family. In terms of assembly, associates with the 50S ribosomal subunit.

Functionally, GTPase that plays an essential role in the late steps of ribosome biogenesis. This Methylococcus capsulatus (strain ATCC 33009 / NCIMB 11132 / Bath) protein is GTPase Der.